The primary structure comprises 126 residues: uncharacterized protein (126 aa).

In terms of domain architecture, HIT spans 19-126; that stretch reads IFERIIEGAV…LGGGLLGSIA (108 aa). Positions 111-115 match the Histidine triad motif motif; it reads HLHIH.

This is an uncharacterized protein from Chlamydia muridarum (strain MoPn / Nigg).